We begin with the raw amino-acid sequence, 124 residues long: Small ribosomal subunit protein uS12c (124 aa).

Disordered stretches follow at residues 1-28 and 104-124; these read MPTIQQLVRSERHKSSKKTKSPALKGCP and ASGVKDRKKSRSKYGAKQPKT. Basic residues-rich tracts occupy residues 11 to 20 and 109 to 124; these read ERHKSSKKTK and DRKKSRSKYGAKQPKT.

This sequence belongs to the universal ribosomal protein uS12 family. In terms of assembly, part of the 30S ribosomal subunit.

It is found in the plastid. Its subcellular location is the chloroplast. In terms of biological role, with S4 and S5 plays an important role in translational accuracy. Located at the interface of the 30S and 50S subunits. The protein is Small ribosomal subunit protein uS12c (rps12) of Gracilaria tenuistipitata var. liui (Red alga).